A 195-amino-acid chain; its full sequence is Imidazoleglycerol-phosphate dehydratase (195 aa).

Belongs to the imidazoleglycerol-phosphate dehydratase family.

The protein localises to the cytoplasm. It carries out the reaction D-erythro-1-(imidazol-4-yl)glycerol 3-phosphate = 3-(imidazol-4-yl)-2-oxopropyl phosphate + H2O. It participates in amino-acid biosynthesis; L-histidine biosynthesis; L-histidine from 5-phospho-alpha-D-ribose 1-diphosphate: step 6/9. The protein is Imidazoleglycerol-phosphate dehydratase of Bordetella avium (strain 197N).